A 569-amino-acid chain; its full sequence is Arginine--tRNA ligase (569 aa).

The 'HIGH' region signature appears at 123-133 (ANPNGPLHVGH).

The protein belongs to the class-I aminoacyl-tRNA synthetase family.

The protein resides in the cytoplasm. The enzyme catalyses tRNA(Arg) + L-arginine + ATP = L-arginyl-tRNA(Arg) + AMP + diphosphate. This Methanosarcina mazei (strain ATCC BAA-159 / DSM 3647 / Goe1 / Go1 / JCM 11833 / OCM 88) (Methanosarcina frisia) protein is Arginine--tRNA ligase.